We begin with the raw amino-acid sequence, 92 residues long: uncharacterized protein (92 aa).

The helical transmembrane segment at 65 to 86 (AVWIFWLCFLVSGLSRAFLVYF) threads the bilayer.

Its subcellular location is the membrane. This is an uncharacterized protein from Treponema pallidum (strain Nichols).